A 220-amino-acid chain; its full sequence is Superoxide dismutase [Cu-Zn], chloroplastic (220 aa).

The transit peptide at 1-66 (MAAHCILFSS…AAPKPLTVFA (66 aa)) directs the protein to the chloroplast. Cu cation is bound by residues His-112, His-114, and His-129. An intrachain disulfide couples Cys-123 to Cys-212. Positions 129, 137, 146, and 149 each coordinate Zn(2+). Position 186 (His-186) interacts with Cu cation.

The protein belongs to the Cu-Zn superoxide dismutase family. As to quaternary structure, homotetramer. The cofactor is Cu cation. It depends on Zn(2+) as a cofactor.

Its subcellular location is the plastid. The protein resides in the chloroplast. It carries out the reaction 2 superoxide + 2 H(+) = H2O2 + O2. In terms of biological role, destroys radicals which are normally produced within the cells and which are toxic to biological systems. This Solidago canadensis var. scabra (Tall goldenrod) protein is Superoxide dismutase [Cu-Zn], chloroplastic (SODCP).